The sequence spans 2264 residues: Protein Ycf2 (2264 aa).

1611–1618 (GSIGTGRS) contacts ATP.

Belongs to the Ycf2 family.

It is found in the plastid. It localises to the chloroplast stroma. Functionally, probable ATPase of unknown function. Its presence in a non-photosynthetic plant (Epifagus virginiana) and experiments in tobacco indicate that it has an essential function which is probably not related to photosynthesis. The polypeptide is Protein Ycf2 (Lactuca sativa (Garden lettuce)).